The chain runs to 455 residues: Aminopeptidase YwaD (455 aa).

The first 31 residues, 1–31 (MKKLLTVMTMAVLTAGTLLLPAQSVTPAAHA), serve as a signal peptide directing secretion. Residues histidine 250, aspartate 262, glutamate 295, aspartate 323, and histidine 401 each contribute to the Zn(2+) site.

This sequence belongs to the peptidase M28 family. M28B subfamily. Monomer. The cofactor is Zn(2+).

Its subcellular location is the secreted. It catalyses the reaction Release of N-terminal Arg and Lys from oligopeptides when P1' is not Pro. Also acts on arylamides of Arg and Lys.. It carries out the reaction Release of an N-terminal amino acid, preferentially leucine, but not glutamic or aspartic acids.. Catalyzes the hydrolysis of a range of N-terminal amino acids. This is Aminopeptidase YwaD (ywaD) from Bacillus subtilis (strain 168).